Here is a 195-residue protein sequence, read N- to C-terminus: Group XIIB secretory phospholipase A2-like protein (195 aa).

An N-terminal signal peptide occupies residues Met1–Ala19. The Ca(2+) site is built by Ser89, Tyr91, Leu93, and Asp116.

This sequence belongs to the phospholipase A2 family. Ca(2+) serves as cofactor.

The protein localises to the secreted. Its function is as follows. Not known; does not seem to have catalytic activity. The protein is Group XIIB secretory phospholipase A2-like protein (Pla2g12b) of Mus musculus (Mouse).